Consider the following 81-residue polypeptide: Cytotoxin 5b (81 aa).

A signal peptide spans 1-21 (MKTLLLTLLVVTIVCLDLGYT). Intrachain disulfides connect Cys-24/Cys-42, Cys-35/Cys-59, Cys-63/Cys-74, and Cys-75/Cys-80.

This sequence belongs to the three-finger toxin family. Short-chain subfamily. Type IA cytotoxin sub-subfamily. As to quaternary structure, monomer in solution; Homodimer and oligomer in the presence of negatively charged lipids forming a pore with a size ranging between 20 and 30 Angstroms. As to expression, expressed by the venom gland.

The protein localises to the secreted. The protein resides in the target cell membrane. Shows cytolytic activity on many different cells by forming pore in lipid membranes. In vivo, increases heart rate or kills the animal by cardiac arrest. In addition, it binds to heparin with high affinity, interacts with Kv channel-interacting protein 1 (KCNIP1) in a calcium-independent manner, and binds to integrin alpha-V/beta-3 (ITGAV/ITGB3) with moderate affinity. This is Cytotoxin 5b from Naja sputatrix (Malayan spitting cobra).